Reading from the N-terminus, the 298-residue chain is N-acetylmuramic acid 6-phosphate etherase (298 aa).

The region spanning 55–218 (IHAQVSGGGR…STGLMIKSGK (164 aa)) is the SIS domain. Residue Glu83 is the Proton donor of the active site. Residue Glu114 is part of the active site.

It belongs to the GCKR-like family. MurNAc-6-P etherase subfamily. In terms of assembly, homodimer.

The enzyme catalyses N-acetyl-D-muramate 6-phosphate + H2O = N-acetyl-D-glucosamine 6-phosphate + (R)-lactate. The protein operates within amino-sugar metabolism; 1,6-anhydro-N-acetylmuramate degradation. Its pathway is amino-sugar metabolism; N-acetylmuramate degradation. It functions in the pathway cell wall biogenesis; peptidoglycan recycling. In terms of biological role, specifically catalyzes the cleavage of the D-lactyl ether substituent of MurNAc 6-phosphate, producing GlcNAc 6-phosphate and D-lactate. Together with AnmK, is also required for the utilization of anhydro-N-acetylmuramic acid (anhMurNAc) either imported from the medium or derived from its own cell wall murein, and thus plays a role in cell wall recycling. In Shigella dysenteriae serotype 1 (strain Sd197), this protein is N-acetylmuramic acid 6-phosphate etherase.